The primary structure comprises 531 residues: Polygalacturonase (531 aa).

Residues 1-23 form the signal peptide; sequence MILSHRYTLIALAAAILSSGAHA. Asp-307 functions as the Proton donor in the catalytic mechanism. His-333 is an active-site residue. The interval 518–531 is required for PGA export across the outer membrane and catalytic activity; that stretch reads AFVPLKSVAPTSPI.

The protein belongs to the glycosyl hydrolase 28 family. In terms of assembly, monomer.

The protein resides in the secreted. The catalysed reaction is (1,4-alpha-D-galacturonosyl)n+m + H2O = (1,4-alpha-D-galacturonosyl)n + (1,4-alpha-D-galacturonosyl)m.. In terms of biological role, contributes to the wilt disease production on tomato. This Ralstonia nicotianae (strain ATCC BAA-1114 / GMI1000) (Ralstonia solanacearum) protein is Polygalacturonase (pglA).